Here is a 416-residue protein sequence, read N- to C-terminus: Multifunctional CCA protein (416 aa).

Residues G8 and R11 each contribute to the ATP site. G8 and R11 together coordinate CTP. Residues D21 and D23 each contribute to the Mg(2+) site. R91, R138, and R141 together coordinate ATP. Positions 91, 138, and 141 each coordinate CTP. The 103-residue stretch at T229–F331 folds into the HD domain.

The protein belongs to the tRNA nucleotidyltransferase/poly(A) polymerase family. Bacterial CCA-adding enzyme type 1 subfamily. Monomer. Can also form homodimers and oligomers. The cofactor is Mg(2+). Ni(2+) serves as cofactor.

It carries out the reaction a tRNA precursor + 2 CTP + ATP = a tRNA with a 3' CCA end + 3 diphosphate. The catalysed reaction is a tRNA with a 3' CCA end + 2 CTP + ATP = a tRNA with a 3' CCACCA end + 3 diphosphate. Catalyzes the addition and repair of the essential 3'-terminal CCA sequence in tRNAs without using a nucleic acid template. Adds these three nucleotides in the order of C, C, and A to the tRNA nucleotide-73, using CTP and ATP as substrates and producing inorganic pyrophosphate. tRNA 3'-terminal CCA addition is required both for tRNA processing and repair. Also involved in tRNA surveillance by mediating tandem CCA addition to generate a CCACCA at the 3' terminus of unstable tRNAs. While stable tRNAs receive only 3'-terminal CCA, unstable tRNAs are marked with CCACCA and rapidly degraded. This is Multifunctional CCA protein from Xylella fastidiosa (strain M12).